The chain runs to 325 residues: Short chain isoprenyl diphosphate synthase (325 aa).

Residues Lys44, Arg47, and His76 each contribute to the isopentenyl diphosphate site. The Mg(2+) site is built by Asp83 and Asp87. Arg92 is an an all-trans-polyprenyl diphosphate binding site. Residue Arg93 participates in isopentenyl diphosphate binding. The an all-trans-polyprenyl diphosphate site is built by Lys173, Thr174, Gln211, Lys228, and Lys238.

Belongs to the FPP/GGPP synthase family. Homodimer. Mg(2+) is required as a cofactor.

It localises to the cytoplasm. The polypeptide is Short chain isoprenyl diphosphate synthase (idsA) (Methanothermobacter thermautotrophicus (strain ATCC 29096 / DSM 1053 / JCM 10044 / NBRC 100330 / Delta H) (Methanobacterium thermoautotrophicum)).